The following is a 560-amino-acid chain: DNA ligase B (560 aa).

K124 acts as the N6-AMP-lysine intermediate in catalysis.

The protein belongs to the NAD-dependent DNA ligase family. LigB subfamily.

The catalysed reaction is NAD(+) + (deoxyribonucleotide)n-3'-hydroxyl + 5'-phospho-(deoxyribonucleotide)m = (deoxyribonucleotide)n+m + AMP + beta-nicotinamide D-nucleotide.. Catalyzes the formation of phosphodiester linkages between 5'-phosphoryl and 3'-hydroxyl groups in double-stranded DNA using NAD as a coenzyme and as the energy source for the reaction. The protein is DNA ligase B of Escherichia coli O9:H4 (strain HS).